Reading from the N-terminus, the 93-residue chain is FMRFamide-like neuropeptides 22 (93 aa).

The N-terminal stretch at 1–19 is a signal peptide; sequence MNRSMIALCVVLMVSLVSA. Residues 20–46 constitute a propeptide that is removed on maturation; the sequence is QVFDLDGQQLAGLEQNDARLMEQQVKR. Residues Phe55, Phe67, and Phe79 each carry the phenylalanine amide modification. The propeptide occupies 83–93; it reads SGAEAVSEQDY.

Belongs to the FARP (FMRFamide related peptide) family.

It is found in the secreted. Functionally, FMRFamides and FMRFamide-like peptides are neuropeptides. SPSAKWMRF-amide: Acts as a ligand for the npr-22 receptor in vitro. This chain is FMRFamide-like neuropeptides 22, found in Caenorhabditis elegans.